A 325-amino-acid polypeptide reads, in one-letter code: Glutarate 2-hydroxylase (325 aa).

Residues His-160, Asp-162, and His-292 each contribute to the Fe cation site.

It belongs to the glutarate hydroxylase family. In terms of assembly, homotetramer. Fe(2+) is required as a cofactor.

The catalysed reaction is glutarate + 2-oxoglutarate + O2 = (S)-2-hydroxyglutarate + succinate + CO2. It functions in the pathway amino-acid degradation. In terms of biological role, acts as an alpha-ketoglutarate-dependent dioxygenase catalyzing hydroxylation of glutarate (GA) to L-2-hydroxyglutarate (L2HG). Functions in a L-lysine degradation pathway that proceeds via cadaverine, glutarate and L-2-hydroxyglutarate. In Escherichia coli O6:K15:H31 (strain 536 / UPEC), this protein is Glutarate 2-hydroxylase.